Consider the following 158-residue polypeptide: Phosphopantetheine adenylyltransferase (158 aa).

Serine 9 serves as a coordination point for substrate. ATP is bound by residues 9 to 10 and histidine 17; that span reads SF. Lysine 41, threonine 73, and arginine 87 together coordinate substrate. Residues 88 to 90, glutamate 98, and 122 to 128 contribute to the ATP site; these read GLR and NQNISSS.

The protein belongs to the bacterial CoaD family. Homohexamer. The cofactor is Mg(2+).

Its subcellular location is the cytoplasm. It catalyses the reaction (R)-4'-phosphopantetheine + ATP + H(+) = 3'-dephospho-CoA + diphosphate. It participates in cofactor biosynthesis; coenzyme A biosynthesis; CoA from (R)-pantothenate: step 4/5. Reversibly transfers an adenylyl group from ATP to 4'-phosphopantetheine, yielding dephospho-CoA (dPCoA) and pyrophosphate. The protein is Phosphopantetheine adenylyltransferase of Leuconostoc citreum (strain KM20).